A 319-amino-acid chain; its full sequence is Alpha/beta-gliadin A-V (319 aa).

An N-terminal signal peptide occupies residues 1–20 (MKTFLILALLAIVATTATTA). Residues 28-58 (LQPQNPSQQQPQEQVPLVQQQQFPGQQQQFP) show a composition bias toward low complexity. Disordered stretches follow at residues 28–125 (LQPQ…QQAQ) and 258–278 (SQVS…VQPQ). Pro residues-rich tracts occupy residues 59–71 (PQQP…PFPS) and 81–104 (FPQP…PQQP). Residues 105 to 125 (YPQQQPQYLQPQQPISQQQAQ) show a composition bias toward low complexity. Polar residues predominate over residues 267 to 278 (LNPQAQGSVQPQ).

Belongs to the gliadin/glutenin family. Substrate of transglutaminase.

Gliadin is the major seed storage protein in wheat. The protein is Alpha/beta-gliadin A-V of Triticum aestivum (Wheat).